The chain runs to 254 residues: UPF0246 protein Fphi_1075 (254 aa).

It belongs to the UPF0246 family.

This Francisella philomiragia subsp. philomiragia (strain ATCC 25017 / CCUG 19701 / FSC 153 / O#319-036) protein is UPF0246 protein Fphi_1075.